Consider the following 138-residue polypeptide: Large ribosomal subunit protein uL16 (138 aa).

The span at methionine 1–glutamine 17 shows a compositional bias: basic residues. A disordered region spans residues methionine 1–serine 22.

It belongs to the universal ribosomal protein uL16 family. In terms of assembly, part of the 50S ribosomal subunit.

Binds 23S rRNA and is also seen to make contacts with the A and possibly P site tRNAs. The chain is Large ribosomal subunit protein uL16 from Mycobacterium leprae (strain Br4923).